The sequence spans 246 residues: Pyridoxine 5'-phosphate synthase (246 aa).

Residues asparagine 8 and arginine 19 each coordinate 3-amino-2-oxopropyl phosphate. The Proton acceptor role is filled by histidine 44. 1-deoxy-D-xylulose 5-phosphate-binding residues include arginine 46 and histidine 51. Glutamate 76 (proton acceptor) is an active-site residue. Threonine 106 lines the 1-deoxy-D-xylulose 5-phosphate pocket. The active-site Proton donor is the histidine 198. Residues aspartate 199 and 221 to 222 contribute to the 3-amino-2-oxopropyl phosphate site; that span reads GH.

Belongs to the PNP synthase family. In terms of assembly, homooctamer; tetramer of dimers.

Its subcellular location is the cytoplasm. The catalysed reaction is 3-amino-2-oxopropyl phosphate + 1-deoxy-D-xylulose 5-phosphate = pyridoxine 5'-phosphate + phosphate + 2 H2O + H(+). The protein operates within cofactor biosynthesis; pyridoxine 5'-phosphate biosynthesis; pyridoxine 5'-phosphate from D-erythrose 4-phosphate: step 5/5. Catalyzes the complicated ring closure reaction between the two acyclic compounds 1-deoxy-D-xylulose-5-phosphate (DXP) and 3-amino-2-oxopropyl phosphate (1-amino-acetone-3-phosphate or AAP) to form pyridoxine 5'-phosphate (PNP) and inorganic phosphate. This is Pyridoxine 5'-phosphate synthase from Brucella abortus (strain S19).